Consider the following 590-residue polypeptide: Ankyrin repeat domain-containing protein 13A (590 aa).

2 ANK repeats span residues 40-69 (RGRT…DVTK) and 73-102 (QGWT…YHNT). At Ser-205 the chain carries Phosphoserine. UIM domains lie at 483–502 (EDYE…SSRS), 519–538 (TYDA…STEG), 549–568 (RFDN…LEEW), and 574–590 (EEEA…LTDK). Ser-586 carries the phosphoserine modification.

As to quaternary structure, interacts (via the UIM 3 and 4 repeats) with EGFR (ubiquitinated); the interaction is direct, inhibited by ANKRD13A monoubiquitination and may regulate EGFR internalization. In terms of processing, monoubiquitinated, inhibits interaction with ubiquitinated EGFR.

Its subcellular location is the cell membrane. It localises to the late endosome. Functionally, ubiquitin-binding protein that specifically recognizes and binds 'Lys-63'-linked ubiquitin. Does not bind 'Lys-48'-linked ubiquitin. Positively regulates the internalization of ligand-activated EGFR by binding to the Ub moiety of ubiquitinated EGFR at the cell membrane. In Homo sapiens (Human), this protein is Ankyrin repeat domain-containing protein 13A (ANKRD13A).